Consider the following 199-residue polypeptide: Glycerol-3-phosphate acyltransferase (199 aa).

Helical transmembrane passes span 3-23 (YILIGLISYFCGAIPFSYLLP), 50-70 (VIGFICMVLDGVKAFVPVLVF), 77-97 (IHYTGISSIFAVLGHDFPVFL), 110-130 (GVFFALCPICGFTFLATWISI), and 136-156 (YVSLASIVGMYAASFVAFFFN).

The protein belongs to the PlsY family. Probably interacts with PlsX.

The protein resides in the cell inner membrane. It carries out the reaction an acyl phosphate + sn-glycerol 3-phosphate = a 1-acyl-sn-glycero-3-phosphate + phosphate. Its pathway is lipid metabolism; phospholipid metabolism. Catalyzes the transfer of an acyl group from acyl-phosphate (acyl-PO(4)) to glycerol-3-phosphate (G3P) to form lysophosphatidic acid (LPA). This enzyme utilizes acyl-phosphate as fatty acyl donor, but not acyl-CoA or acyl-ACP. The protein is Glycerol-3-phosphate acyltransferase of Pseudothermotoga lettingae (strain ATCC BAA-301 / DSM 14385 / NBRC 107922 / TMO) (Thermotoga lettingae).